We begin with the raw amino-acid sequence, 110 residues long: U1-lycotoxin-Ls1cc (110 aa).

The N-terminal stretch at 1–20 (MKFVLLFGVLLVTLFSYSSA) is a signal peptide. A propeptide spanning residues 21 to 44 (EMLDDFDQADEDELLSLIEKEEAR) is cleaved from the precursor. 4 cysteine pairs are disulfide-bonded: Cys-47–Cys-62, Cys-54–Cys-71, Cys-61–Cys-89, and Cys-73–Cys-87.

It belongs to the neurotoxin 19 (CSTX) family. 03 subfamily. In terms of tissue distribution, expressed by the venom gland.

Its subcellular location is the secreted. The sequence is that of U1-lycotoxin-Ls1cc from Lycosa singoriensis (Wolf spider).